The chain runs to 413 residues: Cardiolipin synthase B (413 aa).

2 PLD phosphodiesterase domains span residues 108 to 135 (IFRR…SAEH) and 285 to 312 (RRRP…DPLS). Catalysis depends on residues His113, Lys115, Asp120, His290, Lys292, and Asp297. The interval 388–413 (AQVPPPAQPEMETQDRVDPENTGVKP) is disordered.

This sequence belongs to the phospholipase D family. Cardiolipin synthase subfamily. ClsB sub-subfamily.

It is found in the cell membrane. It carries out the reaction 2 a 1,2-diacyl-sn-glycero-3-phospho-(1'-sn-glycerol) = a cardiolipin + glycerol. Its function is as follows. Catalyzes the phosphatidyl group transfer from one phosphatidylglycerol molecule to another to form cardiolipin (CL) (diphosphatidylglycerol) and glycerol. This is Cardiolipin synthase B from Salmonella typhimurium (strain LT2 / SGSC1412 / ATCC 700720).